Here is a 348-residue protein sequence, read N- to C-terminus: Uroporphyrinogen decarboxylase (348 aa).

Substrate-binding positions include 27–31 (RQAGR), phenylalanine 46, aspartate 76, tyrosine 152, serine 207, and histidine 320.

This sequence belongs to the uroporphyrinogen decarboxylase family. In terms of assembly, homodimer.

It is found in the cytoplasm. The catalysed reaction is uroporphyrinogen III + 4 H(+) = coproporphyrinogen III + 4 CO2. It participates in porphyrin-containing compound metabolism; protoporphyrin-IX biosynthesis; coproporphyrinogen-III from 5-aminolevulinate: step 4/4. Its function is as follows. Catalyzes the decarboxylation of four acetate groups of uroporphyrinogen-III to yield coproporphyrinogen-III. The protein is Uroporphyrinogen decarboxylase of Bacillus cereus (strain G9842).